Reading from the N-terminus, the 412-residue chain is uncharacterized protein (412 aa).

Repeat copies occupy residues 112-116 (GSIRS), 117-121 (GSIRS), 122-126 (GSIRD), 127-131 (GSIRD), 132-136 (GSIRS), 137-141 (GNIRD), and 142-146 (GSVRS). The 7 X 5 AA tandem repeats of G-[NS]-[IV]-R-[DNS] stretch occupies residues 112 to 146 (GSIRSGSIRSGSIRDGSIRDGSIRSGNIRDGSVRS). Over residues 116–126 (SGSIRSGSIRD) the composition is skewed to low complexity. The segment at 116–208 (SGSIRSGSIR…YSEKSIKPST (93 aa)) is disordered. Basic and acidic residues predominate over residues 192-208 (NHYAESEYSEKSIKPST).

This sequence belongs to the asfivirus B407L family.

This is an uncharacterized protein from Ornithodoros (relapsing fever ticks).